The sequence spans 135 residues: Large ribosomal subunit protein bL17 (135 aa).

Belongs to the bacterial ribosomal protein bL17 family. Part of the 50S ribosomal subunit. Contacts protein L32.

In Rhodopseudomonas palustris (strain BisB18), this protein is Large ribosomal subunit protein bL17.